Consider the following 419-residue polypeptide: L-rhamnose isomerase (419 aa).

Positions 262, 294, and 296 each coordinate Mn(2+).

The protein belongs to the rhamnose isomerase family. In terms of assembly, homotetramer. Mn(2+) is required as a cofactor.

Its subcellular location is the cytoplasm. The catalysed reaction is L-rhamnopyranose = L-rhamnulose. It participates in carbohydrate degradation; L-rhamnose degradation; glycerone phosphate from L-rhamnose: step 1/3. In terms of biological role, catalyzes the interconversion of L-rhamnose and L-rhamnulose. The protein is L-rhamnose isomerase of Salmonella gallinarum (strain 287/91 / NCTC 13346).